The chain runs to 444 residues: Putative GTP cyclohydrolase URC1 (444 aa).

Position 268–272 (268–272 (RVHDE)) interacts with GTP. Zn(2+) is bound by residues cysteine 273, cysteine 284, and cysteine 286. 315–317 (EGR) provides a ligand contact to GTP. Catalysis depends on aspartate 353, which acts as the Proton acceptor. Arginine 355 (nucleophile) is an active-site residue. GTP-binding residues include serine 377 and lysine 382.

It belongs to the GTP cyclohydrolase II family.

The protein resides in the cytoplasm. It is found in the nucleus. Functionally, involved in uracil catabolism. The sequence is that of Putative GTP cyclohydrolase URC1 (URC1) from Lachancea kluyveri (Yeast).